Here is an 825-residue protein sequence, read N- to C-terminus: Extracellular exo-alpha-L-arabinofuranosidase (825 aa).

The signal sequence occupies residues 1–29; sequence MSRIRWRYGTAATALLVAAGLVPTATAHA. E58 contacts alpha-L-arabinofuranose. Residues 70–215 form the CBM-cenC domain; that stretch reads AELVQNRSFE…ALDMVSLFPR (146 aa). Alpha-L-arabinofuranose is bound by residues C247 and 379 to 380; that span reads NE. E380 acts as the Proton donor/acceptor in catalysis.

Belongs to the glycosyl hydrolase 51 family.

The protein localises to the secreted. It carries out the reaction Hydrolysis of terminal non-reducing alpha-L-arabinofuranoside residues in alpha-L-arabinosides.. In terms of biological role, involved in the degradation of arabinan and is a key enzyme in the complete degradation of the plant cell wall. Catalyzes the cleavage of terminal alpha-L-arabinofuranosyl residues of arabinan present in the arabinofuranosyl polysaccharides or oligosaccharides. It cannot act on other arabinose-containing polysaccharides and arabinoxylo-oligosaccharides. It leaves most of the polymer intact, including most of the main-chain residues and the arabinose side chains. It acts preferentially on the linear alpha-(1-&gt;2)-linked arabinofuranobiosides and alpha-(1-&gt;3)-linked arabinofuranobiosides, and is much less effective on alpha-(1-&gt;5)-linked arabinofuranobiosides. It also hydrolyzes the terminal alpha-(1-&gt;3)-linked arabinofuranotriosides in preference to the alpha-(1-&gt;5)-linked arabinofuranotriosides. This chain is Extracellular exo-alpha-L-arabinofuranosidase, found in Streptomyces chartreusis.